We begin with the raw amino-acid sequence, 128 residues long: Probable 4-amino-4-deoxy-L-arabinose-phosphoundecaprenol flippase subunit ArnF (128 aa).

Topologically, residues 1-2 are cytoplasmic; the sequence is MG. The helical transmembrane segment at 3 to 23 threads the bilayer; that stretch reads LMWGLFSVIIASAAQLSLGFA. The Periplasmic portion of the chain corresponds to 24-32; sequence ASHLPPMTH. The helical transmembrane segment at 33 to 53 threads the bilayer; sequence LWDFIAALLAFGLDARILLLG. The Cytoplasmic segment spans residues 54–76; it reads LQGYLLSVFCWYKTLHKLALSKA. A helical membrane pass occupies residues 77–97; the sequence is YALLSMSYVLVWIASMVLPGW. Residues 98–100 lie on the Periplasmic side of the membrane; sequence EGT. A helical membrane pass occupies residues 101–121; the sequence is FSLKALLGVACIMSGLMLIFL. Over 122-128 the chain is Cytoplasmic; the sequence is PTTKQRY.

This sequence belongs to the ArnF family. Heterodimer of ArnE and ArnF.

It localises to the cell inner membrane. It functions in the pathway bacterial outer membrane biogenesis; lipopolysaccharide biosynthesis. Translocates 4-amino-4-deoxy-L-arabinose-phosphoundecaprenol (alpha-L-Ara4N-phosphoundecaprenol) from the cytoplasmic to the periplasmic side of the inner membrane. The protein is Probable 4-amino-4-deoxy-L-arabinose-phosphoundecaprenol flippase subunit ArnF of Escherichia coli O7:K1 (strain IAI39 / ExPEC).